Here is a 469-residue protein sequence, read N- to C-terminus: Coumaroyl-CoA:anthocyanidin 3-O-glucoside-6''-O-coumaroyltransferase 1 (469 aa).

Met1 is subject to N-acetylmethionine. Active-site proton acceptor residues include His173 and Asp410.

The protein belongs to the plant acyltransferase family. Highly expressed in flowers, leaves and roots. Lower levels of expression in stems and siliques.

Functionally, involved in the acylation of the 6'' position of the 3-O-glucose residue of anthocyanin. Also able to use flavonol 3-glucosides as the acyl acceptor. The sequence is that of Coumaroyl-CoA:anthocyanidin 3-O-glucoside-6''-O-coumaroyltransferase 1 (3AT1) from Arabidopsis thaliana (Mouse-ear cress).